A 442-amino-acid polypeptide reads, in one-letter code: Dol-P-Man:Man(5)GlcNAc(2)-PP-Dol alpha-1,3-mannosyltransferase (442 aa).

Residues 1 to 34 (MAAPSSRPESNPPLYKQALDFALDVANGRHALSK) lie on the Lumenal side of the membrane. The chain crosses the membrane as a helical span at residues 35–55 (LIPPALFLVDALLCGLIIWKV). Over 56–84 (PYTEIDWAAYMEQVSQILSGERDYTKVRG) the chain is Cytoplasmic. The helical transmembrane segment at 85–105 (GTGPLVYPAAHVYIYTGLYHL) threads the bilayer. Residues 106 to 111 (TDEGRN) are Lumenal-facing. A helical transmembrane segment spans residues 112-132 (ILLAQQLFAGLYMVTLAVVMG). Topologically, residues 133-155 (CYWQAKAPPYLFPLLTLSKRLHS) are cytoplasmic. A helical transmembrane segment spans residues 156–176 (IFVLRCFNDCFAVLFLWLAIF). Over 177 to 198 (FFQRRNWQAGALLYTLGLGVKM) the chain is Lumenal. Residues 199-219 (TLLLSLPAVGIVLFLGSGSFV) form a helical membrane-spanning segment. A topological domain (cytoplasmic) is located at residue Thr220. A helical membrane pass occupies residues 221–241 (TLQLVATMGLVQILIGVPFLA). Over 242–272 (HYPTEYLSRAFELSRQFFFKWTVNWRFVGEE) the chain is Lumenal. Residues 273–293 (IFLSKGFALTLLALHVLVLGI) traverse the membrane as a helical segment. Residues 294-333 (FITTRWIKPARKSLVQLISPVLLAGKPPLTVPEHRAAARD) lie on the Cytoplasmic side of the membrane. Residues 334-354 (VTPRYIMTTILSANAVGLLFA) form a helical membrane-spanning segment. The Lumenal portion of the chain corresponds to 355–376 (RSLHYQFYAYVAWSTPFLLWRA). A helical membrane pass occupies residues 377-397 (GLHPVLVYLLWAVHEWAWNVF). Over 398–401 (PSTP) the chain is Cytoplasmic. The helical transmembrane segment at 402 to 422 (ASSAVVVGVLGVTVAGVWFGA) threads the bilayer. At 423-442 (REEWEPGMKSSSKKEEAAMR) the chain is on the lumenal side.

This sequence belongs to the glycosyltransferase ALG3 family.

Its subcellular location is the endoplasmic reticulum membrane. It carries out the reaction an alpha-D-Man-(1-&gt;2)-alpha-D-Man-(1-&gt;2)-alpha-D-Man-(1-&gt;3)-[alpha-D-Man-(1-&gt;6)]-beta-D-Man-(1-&gt;4)-beta-D-GlcNAc-(1-&gt;4)-alpha-D-GlcNAc-diphospho-di-trans,poly-cis-dolichol + a di-trans,poly-cis-dolichyl beta-D-mannosyl phosphate = an alpha-D-Man-(1-&gt;2)-alpha-D-Man-(1-&gt;2)-alpha-D-Man-(1-&gt;3)-[alpha-D-Man-(1-&gt;3)-alpha-D-Man-(1-&gt;6)]-beta-D-Man-(1-&gt;4)-beta-D-GlcNAc-(1-&gt;4)-alpha-D-GlcNAc-diphospho-di-trans,poly-cis-dolichol + a di-trans,poly-cis-dolichyl phosphate + H(+). The protein operates within protein modification; protein glycosylation. Functionally, dol-P-Man:Man(5)GlcNAc(2)-PP-Dol alpha-1,3-mannosyltransferase that operates in the biosynthetic pathway of dolichol-linked oligosaccharides, the glycan precursors employed in protein asparagine (N)-glycosylation. The assembly of dolichol-linked oligosaccharides begins on the cytosolic side of the endoplasmic reticulum membrane and finishes in its lumen. The sequential addition of sugars to dolichol pyrophosphate produces dolichol-linked oligosaccharides containing fourteen sugars, including two GlcNAcs, nine mannoses and three glucoses. Once assembled, the oligosaccharide is transferred from the lipid to nascent proteins by oligosaccharyltransferases. In the lumen of the endoplasmic reticulum, adds the first dolichyl beta-D-mannosyl phosphate derived mannose in an alpha-1,3 linkage to Man(5)GlcNAc(2)-PP-dolichol to produce Man(6)GlcNAc(2)-PP-dolichol. The chain is Dol-P-Man:Man(5)GlcNAc(2)-PP-Dol alpha-1,3-mannosyltransferase (alg-3) from Neurospora crassa (strain ATCC 24698 / 74-OR23-1A / CBS 708.71 / DSM 1257 / FGSC 987).